Consider the following 179-residue polypeptide: Large ribosomal subunit protein uL5 (179 aa).

This sequence belongs to the universal ribosomal protein uL5 family. As to quaternary structure, part of the 50S ribosomal subunit; part of the 5S rRNA/L5/L18/L25 subcomplex. Contacts the 5S rRNA and the P site tRNA. Forms a bridge to the 30S subunit in the 70S ribosome.

In terms of biological role, this is one of the proteins that bind and probably mediate the attachment of the 5S RNA into the large ribosomal subunit, where it forms part of the central protuberance. In the 70S ribosome it contacts protein S13 of the 30S subunit (bridge B1b), connecting the 2 subunits; this bridge is implicated in subunit movement. Contacts the P site tRNA; the 5S rRNA and some of its associated proteins might help stabilize positioning of ribosome-bound tRNAs. The chain is Large ribosomal subunit protein uL5 from Staphylococcus saprophyticus subsp. saprophyticus (strain ATCC 15305 / DSM 20229 / NCIMB 8711 / NCTC 7292 / S-41).